A 130-amino-acid chain; its full sequence is Zinc finger A20 and AN1 domain-containing stress-associated protein 10 (130 aa).

Residues 4-38 (ETEALPCEGGCGLYGTRVNNNLCSLCYKKSVLQHS) form an A20-type zinc finger. Zn(2+) is bound by residues Cys-10, Cys-14, Cys-26, Cys-29, Cys-71, Cys-74, Cys-85, Cys-87, Cys-92, His-95, His-101, and Cys-103. The AN1-type zinc finger occupies 65-111 (PVKKRRCGICKRKVGMLGFKCRCGHMFCGSHRYPEEHSCPFDYKQSG).

Its function is as follows. May be involved in environmental stress response. This Arabidopsis thaliana (Mouse-ear cress) protein is Zinc finger A20 and AN1 domain-containing stress-associated protein 10 (SAP10).